A 223-amino-acid polypeptide reads, in one-letter code: Enolase-phosphatase E1 (223 aa).

Belongs to the HAD-like hydrolase superfamily. MasA/MtnC family. In terms of assembly, monomer. The cofactor is Mg(2+).

The enzyme catalyses 5-methylsulfanyl-2,3-dioxopentyl phosphate + H2O = 1,2-dihydroxy-5-(methylsulfanyl)pent-1-en-3-one + phosphate. The protein operates within amino-acid biosynthesis; L-methionine biosynthesis via salvage pathway; L-methionine from S-methyl-5-thio-alpha-D-ribose 1-phosphate: step 3/6. Its pathway is amino-acid biosynthesis; L-methionine biosynthesis via salvage pathway; L-methionine from S-methyl-5-thio-alpha-D-ribose 1-phosphate: step 4/6. Its function is as follows. Bifunctional enzyme that catalyzes the enolization of 2,3-diketo-5-methylthiopentyl-1-phosphate (DK-MTP-1-P) into the intermediate 2-hydroxy-3-keto-5-methylthiopentenyl-1-phosphate (HK-MTPenyl-1-P), which is then dephosphorylated to form the acireductone 1,2-dihydroxy-3-keto-5-methylthiopentene (DHK-MTPene). The protein is Enolase-phosphatase E1 of Aquifex aeolicus (strain VF5).